The following is a 419-amino-acid chain: Mitogen-activated protein kinase spm1 (419 aa).

The Protein kinase domain occupies 23 to 314; the sequence is YTVTKELGQG…VEEALEHPYL (292 aa). Residues 29–37 and Lys-52 each bind ATP; that span reads LGQGAYGIV. Asp-149 serves as the catalytic Proton acceptor.

This sequence belongs to the protein kinase superfamily. Ser/Thr protein kinase family. MAP kinase subfamily. Mg(2+) is required as a cofactor. Post-translationally, phosphorylated by the MAP kinase kinase mkk1.

The catalysed reaction is L-seryl-[protein] + ATP = O-phospho-L-seryl-[protein] + ADP + H(+). The enzyme catalyses L-threonyl-[protein] + ATP = O-phospho-L-threonyl-[protein] + ADP + H(+). Mitogen-activated protein kinase, part of the mkh1-mkk1-spm1 MAPK cascade that regulates vegetative growth, conidial formation, colony surface hydrophobicity, osmotic stress, cell wall integrity maintenance, carbon and nitrogen source utilization, chitin distribution, septa formation, and pathogenicity. This Cytospora mali (Apple Valsa canker fungus) protein is Mitogen-activated protein kinase spm1.